We begin with the raw amino-acid sequence, 301 residues long: MNGILPLYKPTGMTSADAVYHARKILGIKKIGHSGTLDPNVDGVLPLAIGAGTKAVPQLMASGKVYTGEITLGFATTTEDLDGEVVDKTPLTQPFTADQLDAALTAWTGNITQIPPMFSAVKVNGRRLYEYARAGETVKRPERQATVSQFTRTDEPVFSATDGTQRFRFEVHVSKGTYIRTLAVDVGKTLGVAAVMSQLTRVKSGGFTLKQAVSIEQLKAHAAAGTLADVIQPIDIAFADLPQVDLTVEQFEAISHGRFLSLDQQTPRVRLHFAGVLKAIYRREDDQYRPDLMFLANEKNV.

The Nucleophile role is filled by Asp38.

The protein belongs to the pseudouridine synthase TruB family. Type 1 subfamily.

The enzyme catalyses uridine(55) in tRNA = pseudouridine(55) in tRNA. Functionally, responsible for synthesis of pseudouridine from uracil-55 in the psi GC loop of transfer RNAs. The sequence is that of tRNA pseudouridine synthase B from Lacticaseibacillus paracasei (strain ATCC 334 / BCRC 17002 / CCUG 31169 / CIP 107868 / KCTC 3260 / NRRL B-441) (Lactobacillus paracasei).